The sequence spans 307 residues: Holliday junction branch migration complex subunit RuvB (307 aa).

The segment at 1 to 167 (MKLQIKPPNN…FGMILNIDYY (167 aa)) is large ATPase domain (RuvB-L). Residues isoleucine 5, glycine 48, lysine 51, threonine 52, threonine 53, 114 to 116 (DDF), arginine 157, tyrosine 167, and arginine 204 contribute to the ATP site. Threonine 52 contributes to the Mg(2+) binding site. The interval 168–233 (SNQEIERIVS…DLAALFKSLM (66 aa)) is small ATPAse domain (RuvB-S). A head domain (RuvB-H) region spans residues 236–307 (KNGLQSIDVQ…RTGRNYLTSC (72 aa)). Lysine 289 and arginine 294 together coordinate DNA.

Belongs to the RuvB family. In terms of assembly, homohexamer. Forms an RuvA(8)-RuvB(12)-Holliday junction (HJ) complex. HJ DNA is sandwiched between 2 RuvA tetramers; dsDNA enters through RuvA and exits via RuvB. An RuvB hexamer assembles on each DNA strand where it exits the tetramer. Each RuvB hexamer is contacted by two RuvA subunits (via domain III) on 2 adjacent RuvB subunits; this complex drives branch migration. In the full resolvosome a probable DNA-RuvA(4)-RuvB(12)-RuvC(2) complex forms which resolves the HJ.

Its subcellular location is the cytoplasm. It carries out the reaction ATP + H2O = ADP + phosphate + H(+). Its function is as follows. The RuvA-RuvB-RuvC complex processes Holliday junction (HJ) DNA during genetic recombination and DNA repair, while the RuvA-RuvB complex plays an important role in the rescue of blocked DNA replication forks via replication fork reversal (RFR). RuvA specifically binds to HJ cruciform DNA, conferring on it an open structure. The RuvB hexamer acts as an ATP-dependent pump, pulling dsDNA into and through the RuvAB complex. RuvB forms 2 homohexamers on either side of HJ DNA bound by 1 or 2 RuvA tetramers; 4 subunits per hexamer contact DNA at a time. Coordinated motions by a converter formed by DNA-disengaged RuvB subunits stimulates ATP hydrolysis and nucleotide exchange. Immobilization of the converter enables RuvB to convert the ATP-contained energy into a lever motion, pulling 2 nucleotides of DNA out of the RuvA tetramer per ATP hydrolyzed, thus driving DNA branch migration. The RuvB motors rotate together with the DNA substrate, which together with the progressing nucleotide cycle form the mechanistic basis for DNA recombination by continuous HJ branch migration. Branch migration allows RuvC to scan DNA until it finds its consensus sequence, where it cleaves and resolves cruciform DNA. The chain is Holliday junction branch migration complex subunit RuvB from Mycoplasma pneumoniae (strain ATCC 29342 / M129 / Subtype 1) (Mycoplasmoides pneumoniae).